A 509-amino-acid chain; its full sequence is Maturase K (509 aa).

It belongs to the intron maturase 2 family. MatK subfamily.

Its subcellular location is the plastid. It is found in the chloroplast. Usually encoded in the trnK tRNA gene intron. Probably assists in splicing its own and other chloroplast group II introns. The protein is Maturase K of Stylosanthes hamata (Caribbean stylo).